A 355-amino-acid chain; its full sequence is tRNA pseudouridine synthase D (355 aa).

The active-site Nucleophile is D84. Positions 160-306 (GVPNYFGLQR…MAHERRILRL (147 aa)) constitute a TRUD domain.

This sequence belongs to the pseudouridine synthase TruD family.

The catalysed reaction is uridine(13) in tRNA = pseudouridine(13) in tRNA. Functionally, responsible for synthesis of pseudouridine from uracil-13 in transfer RNAs. This chain is tRNA pseudouridine synthase D, found in Pseudomonas aeruginosa (strain UCBPP-PA14).